The following is a 541-amino-acid chain: Protein wntless homolog (541 aa).

Topologically, residues 1-15 (MAGAIIENMSTKKLC) are cytoplasmic. A helical membrane pass occupies residues 16-36 (IVGGILLVFQIVAFLVGGLIA). Residues 37–232 (PAPTTAVSYV…GIHQNGGFTK (196 aa)) lie on the Lumenal side of the membrane. The tract at residues 101–202 (MEMSPWFQFM…KYYLLNIRLP (102 aa)) is interaction with Wnt proteins. The helical transmembrane segment at 233 to 253 (VWFAMKTFLTPSIFIIMVWYW) threads the bilayer. The Cytoplasmic portion of the chain corresponds to 254-268 (RRITMMSRPPVLLEK). The chain crosses the membrane as a helical span at residues 269–289 (VIFALGISMTFINIPVEWFSI). Over 290-303 (GFDWTWMLLFGDIR) the chain is Lumenal. The chain crosses the membrane as a helical span at residues 304-324 (QGIFYAMLLSFWIIFCGEHMM). Topologically, residues 325-331 (DQHERNH) are cytoplasmic. A helical membrane pass occupies residues 332–352 (IAGYWKQVGPIAVGSFCLFIF). The Lumenal segment spans residues 353–380 (DMCERGVQLTNPFYSIWTTDVGTELAMA). Residues 381-401 (FIIVAGICLCLYFLFLCFMVF) form a helical membrane-spanning segment. At 402 to 431 (QVFRNISGKQSSLPAMSKVRRLHYEGLIFR) the chain is on the cytoplasmic side. A helical transmembrane segment spans residues 432–452 (FKFLMLITLACAAMTVIFFIV). The Lumenal portion of the chain corresponds to 453–471 (SQVTEGHWKWGGVTVQVSS). Residues 472–492 (AFFTGIYGMWNLYVFALMFLY) form a helical membrane-spanning segment. Topologically, residues 493–541 (APSHKNYGEDQSNGDLGVHSGEELQLTTTITHVDGPTEIYKLTRKEAQE) are cytoplasmic.

The protein belongs to the wntless family. As to quaternary structure, interacts with WNT3A. Interacts with WNT1, WNT3 and WNT5A. In terms of processing, N-glycosylated. Expressed in the brain, skeletal muscle, heart muscle, lung, gut, liver, and kidney (at protein level). In the brain, expressed in the cortex, striatum, ventral tegmentum, nucleus accumbens and to a lesser extent in the Purkinjie cells in the cerebellum. Expressed in eye iridocorneal angle.

It is found in the golgi apparatus membrane. The protein localises to the cytoplasmic vesicle membrane. It localises to the cell membrane. The protein resides in the endoplasmic reticulum membrane. Its subcellular location is the early endosome membrane. Its function is as follows. Regulates Wnt proteins sorting and secretion in a feedback regulatory mechanism. This reciprocal interaction plays a key role in the regulation of expression, subcellular location, binding and organelle-specific association of Wnt proteins. Also plays an important role in establishment of the anterior-posterior body axis formation during development. This chain is Protein wntless homolog (Wls), found in Rattus norvegicus (Rat).